The primary structure comprises 201 residues: Large ribosomal subunit protein uL4 (201 aa).

Residues 45–67 (AQKTRAEVTGSGKKPWRQKGTGR) are disordered.

It belongs to the universal ribosomal protein uL4 family. As to quaternary structure, part of the 50S ribosomal subunit.

Its function is as follows. One of the primary rRNA binding proteins, this protein initially binds near the 5'-end of the 23S rRNA. It is important during the early stages of 50S assembly. It makes multiple contacts with different domains of the 23S rRNA in the assembled 50S subunit and ribosome. In terms of biological role, forms part of the polypeptide exit tunnel. The chain is Large ribosomal subunit protein uL4 from Yersinia enterocolitica serotype O:8 / biotype 1B (strain NCTC 13174 / 8081).